A 411-amino-acid polypeptide reads, in one-letter code: Multidrug resistance protein MdtG (411 aa).

A run of 10 helical transmembrane segments spans residues L14–F34, L56–A76, A89–L109, A113–V133, T144–A164, P171–V191, I219–I239, L254–P274, I288–T308, and A376–L396.

Belongs to the major facilitator superfamily. DHA1 family. MdtG (TC 2.A.1.2.20) subfamily.

The protein localises to the cell inner membrane. In Serratia proteamaculans (strain 568), this protein is Multidrug resistance protein MdtG.